Reading from the N-terminus, the 134-residue chain is D-ribose pyranase (134 aa).

The active-site Proton donor is the His20. Residues Asp28, His101, and 123–125 each bind substrate; that span reads YSN.

It belongs to the RbsD / FucU family. RbsD subfamily. Homodecamer.

The protein localises to the cytoplasm. The enzyme catalyses beta-D-ribopyranose = beta-D-ribofuranose. It participates in carbohydrate metabolism; D-ribose degradation; D-ribose 5-phosphate from beta-D-ribopyranose: step 1/2. Its function is as follows. Catalyzes the interconversion of beta-pyran and beta-furan forms of D-ribose. The sequence is that of D-ribose pyranase from Pseudomonas entomophila (strain L48).